The following is a 252-amino-acid chain: Imidazole glycerol phosphate synthase subunit HisF (252 aa).

Active-site residues include Asp11 and Asp130.

It belongs to the HisA/HisF family. In terms of assembly, heterodimer of HisH and HisF.

Its subcellular location is the cytoplasm. The catalysed reaction is 5-[(5-phospho-1-deoxy-D-ribulos-1-ylimino)methylamino]-1-(5-phospho-beta-D-ribosyl)imidazole-4-carboxamide + L-glutamine = D-erythro-1-(imidazol-4-yl)glycerol 3-phosphate + 5-amino-1-(5-phospho-beta-D-ribosyl)imidazole-4-carboxamide + L-glutamate + H(+). The protein operates within amino-acid biosynthesis; L-histidine biosynthesis; L-histidine from 5-phospho-alpha-D-ribose 1-diphosphate: step 5/9. Functionally, IGPS catalyzes the conversion of PRFAR and glutamine to IGP, AICAR and glutamate. The HisF subunit catalyzes the cyclization activity that produces IGP and AICAR from PRFAR using the ammonia provided by the HisH subunit. This chain is Imidazole glycerol phosphate synthase subunit HisF, found in Moorella thermoacetica (strain ATCC 39073 / JCM 9320).